We begin with the raw amino-acid sequence, 532 residues long: T-complex protein 1 subunit beta (532 aa).

This sequence belongs to the TCP-1 chaperonin family. In terms of assembly, heterooligomeric complex of about 850 to 900 kDa that forms two stacked rings, 12 to 16 nm in diameter.

Its subcellular location is the cytoplasm. In terms of biological role, molecular chaperone; assists the folding of proteins upon ATP hydrolysis. Known to play a role, in vitro, in the folding of actin and tubulin. The chain is T-complex protein 1 subunit beta (cct2) from Dictyostelium discoideum (Social amoeba).